A 432-amino-acid chain; its full sequence is 3-phosphoshikimate 1-carboxyvinyltransferase (432 aa).

3 residues coordinate 3-phosphoshikimate: Lys23, Ser24, and Arg28. Residue Lys23 coordinates phosphoenolpyruvate. Phosphoenolpyruvate contacts are provided by Gly95 and Arg123. 3-phosphoshikimate contacts are provided by Ser167, Gln169, Asp317, and Lys344. Gln169 lines the phosphoenolpyruvate pocket. Asp317 serves as the catalytic Proton acceptor. Phosphoenolpyruvate contacts are provided by Arg348 and Arg390.

This sequence belongs to the EPSP synthase family. Monomer.

The protein resides in the cytoplasm. The enzyme catalyses 3-phosphoshikimate + phosphoenolpyruvate = 5-O-(1-carboxyvinyl)-3-phosphoshikimate + phosphate. It functions in the pathway metabolic intermediate biosynthesis; chorismate biosynthesis; chorismate from D-erythrose 4-phosphate and phosphoenolpyruvate: step 6/7. Functionally, catalyzes the transfer of the enolpyruvyl moiety of phosphoenolpyruvate (PEP) to the 5-hydroxyl of shikimate-3-phosphate (S3P) to produce enolpyruvyl shikimate-3-phosphate and inorganic phosphate. This is 3-phosphoshikimate 1-carboxyvinyltransferase from Staphylococcus aureus (strain bovine RF122 / ET3-1).